The sequence spans 116 residues: Protein Rev (116 aa).

Ser5 is modified (phosphoserine; by host CK2). The homomultimerization stretch occupies residues 18-26 (YIKILYQSN). The Nuclear localization signal and RNA-binding (RRE) signature appears at 34 to 50 (TRKARRNRRRRWRARQR). Residues 73–84 (LQLPLLEKLHIN) carry the Nuclear export signal and binding to XPO1 motif. The disordered stretch occupies residues 90-116 (GQGTEKGVGSPQISVESRAVLGSGTKE). Ser99 bears the Phosphoserine; by host mark.

It belongs to the HIV-1 REV protein family. In terms of assembly, homomultimer; when bound to the RRE. Multimeric assembly is essential for activity and may involve XPO1. Binds to human KPNB1, XPO1, TNPO1, RANBP5 and IPO7. Interacts with the viral Integrase. Interacts with human KHDRBS1. Interacts with human NAP1; this interaction decreases Rev multimerization and stimulates its activity. Interacts with human DEAD-box helicases DDX3 and DDX24; these interactions may serve for viral RNA export to the cytoplasm and packaging, respectively. Interacts with human PSIP1; this interaction may inhibit HIV-1 DNA integration by promoting dissociation of the Integrase-LEDGF/p75 complex. In terms of processing, asymmetrically arginine dimethylated at one site by host PRMT6. Methylation impairs the RNA-binding activity and export of viral RNA from the nucleus to the cytoplasm. Post-translationally, phosphorylated by protein kinase CK2. Presence of, and maybe binding to the N-terminus of the regulatory beta subunit of CK2 is necessary for CK2-mediated Rev's phosphorylation.

Its subcellular location is the host nucleus. The protein localises to the host nucleolus. The protein resides in the host cytoplasm. In terms of biological role, escorts unspliced or incompletely spliced viral pre-mRNAs (late transcripts) out of the nucleus of infected cells. These pre-mRNAs carry a recognition sequence called Rev responsive element (RRE) located in the env gene, that is not present in fully spliced viral mRNAs (early transcripts). This function is essential since most viral proteins are translated from unspliced or partially spliced pre-mRNAs which cannot exit the nucleus by the pathway used by fully processed cellular mRNAs. Rev itself is translated from a fully spliced mRNA that readily exits the nucleus. Rev's nuclear localization signal (NLS) binds directly to KPNB1/Importin beta-1 without previous binding to KPNA1/Importin alpha-1. KPNB1 binds to the GDP bound form of RAN (Ran-GDP) and targets Rev to the nucleus. In the nucleus, the conversion from Ran-GDP to Ran-GTP dissociates Rev from KPNB1 and allows Rev's binding to the RRE in viral pre-mRNAs. Rev multimerization on the RRE via cooperative assembly exposes its nuclear export signal (NES) to the surface. Rev can then form a complex with XPO1/CRM1 and Ran-GTP, leading to nuclear export of the complex. Conversion from Ran-GTP to Ran-GDP mediates dissociation of the Rev/RRE/XPO1/RAN complex, so that Rev can return to the nucleus for a subsequent round of export. Beside KPNB1, also seems to interact with TNPO1/Transportin-1, RANBP5/IPO5 and IPO7/RANBP7 for nuclear import. The nucleoporin-like HRB/RIP is an essential cofactor that probably indirectly interacts with Rev to release HIV RNAs from the perinuclear region to the cytoplasm. The protein is Protein Rev of Human immunodeficiency virus type 1 group M subtype F2 (isolate MP257) (HIV-1).